Reading from the N-terminus, the 340-residue chain is Glyceraldehyde-3-phosphate dehydrogenase (340 aa).

NAD(+)-binding positions include 11 to 12 and glycine 109; that span reads TI. The cysteines at positions 123 and 149 are disulfide-linked. 138–140 contributes to the D-glyceraldehyde 3-phosphate binding site; it reads SCN. The Nucleophile role is filled by cysteine 139. Arginine 167 contacts NAD(+). Residue 193–194 participates in D-glyceraldehyde 3-phosphate binding; that stretch reads HA. Glutamine 300 is an NAD(+) binding site.

Belongs to the glyceraldehyde-3-phosphate dehydrogenase family. In terms of assembly, homotetramer.

It localises to the cytoplasm. The catalysed reaction is D-glyceraldehyde 3-phosphate + phosphate + NADP(+) = (2R)-3-phospho-glyceroyl phosphate + NADPH + H(+). It carries out the reaction D-glyceraldehyde 3-phosphate + phosphate + NAD(+) = (2R)-3-phospho-glyceroyl phosphate + NADH + H(+). It participates in carbohydrate degradation; glycolysis; pyruvate from D-glyceraldehyde 3-phosphate: step 1/5. Functionally, can use both NAD and NADP as cofactors, but exhibits a marked preference for NADP. This Saccharolobus solfataricus (strain ATCC 35092 / DSM 1617 / JCM 11322 / P2) (Sulfolobus solfataricus) protein is Glyceraldehyde-3-phosphate dehydrogenase (gap).